Reading from the N-terminus, the 433-residue chain is 5-methylthioadenosine/S-adenosylhomocysteine deaminase (433 aa).

Positions 67 and 69 each coordinate Zn(2+). Substrate-binding residues include E96, R148, and H187. H214 is a Zn(2+) binding site. Residues E217 and D302 each contribute to the substrate site. D302 is a Zn(2+) binding site.

Belongs to the metallo-dependent hydrolases superfamily. MTA/SAH deaminase family. Zn(2+) is required as a cofactor.

The catalysed reaction is S-adenosyl-L-homocysteine + H2O + H(+) = S-inosyl-L-homocysteine + NH4(+). The enzyme catalyses S-methyl-5'-thioadenosine + H2O + H(+) = S-methyl-5'-thioinosine + NH4(+). In terms of biological role, catalyzes the deamination of 5-methylthioadenosine and S-adenosyl-L-homocysteine into 5-methylthioinosine and S-inosyl-L-homocysteine, respectively. Is also able to deaminate adenosine. This chain is 5-methylthioadenosine/S-adenosylhomocysteine deaminase, found in Carboxydothermus hydrogenoformans (strain ATCC BAA-161 / DSM 6008 / Z-2901).